A 285-amino-acid polypeptide reads, in one-letter code: UPF0354 protein MW1686 (285 aa).

Belongs to the UPF0354 family.

This Staphylococcus aureus (strain MW2) protein is UPF0354 protein MW1686.